The primary structure comprises 112 residues: Large ribosomal subunit protein bL17 (112 aa).

This sequence belongs to the bacterial ribosomal protein bL17 family. In terms of assembly, part of the 50S ribosomal subunit. Contacts protein L32.

The chain is Large ribosomal subunit protein bL17 from Desulforudis audaxviator (strain MP104C).